The chain runs to 175 residues: DELTA-stichotoxin-She4b (175 aa).

The plays an important role in the hemolytic activity stretch occupies residues 1–10 (ALAGTIIAGA). Residues 9–28 (GASLTFQVLDKVLEELGKVS) form an N-terminal region region. Ser52, Val85, Ser103, Pro105, Tyr131, Tyr135, and Tyr136 together coordinate phosphocholine. Residues 103-118 (SVPFDYNWYSNWWDVK) form a trp-rich region, which is important for the binding to lipid membrane region. The short motif at 141-143 (RGD) is the Cell attachment site, crucial for protein stability element.

As to quaternary structure, octamer or nonamer in membranes. Monomer in the soluble state. Originally described as forming tetramer in the presence of a lipidic interface. In terms of tissue distribution, expressed in tentacles and mesenteric filaments.

It localises to the secreted. It is found in the nematocyst. Its subcellular location is the target cell membrane. In terms of biological role, pore-forming protein that forms cations-selective hydrophilic pores of around 1 nm and causes cardiac stimulation and cytolysis. Pore formation is a multi-step process that involves specific recognition of membrane sphingomyelin (but neither cholesterol nor phosphatidylcholine) using aromatic rich region and adjacent phosphocholine (POC) binding site, firm binding to the membrane (mainly driven by hydrophobic interactions) accompanied by the transfer of the N-terminal region to the lipid-water interface and finally pore formation after oligomerization of monomers. Cytolytic effects include red blood cells hemolysis, platelet aggregation and lysis, cytotoxic and cytostatic effects on fibroblasts. Lethality in mammals has been ascribed to severe vasospasm of coronary vessels, cardiac arrhythmia, and inotropic effects. In Stichodactyla helianthus (Sun anemone), this protein is DELTA-stichotoxin-She4b.